The chain runs to 1342 residues: ATP-dependent RNA helicase TDRD9 (1342 aa).

Over residues 31–63 (KAEAEDNATEVRSDKAFSELSSPEKEKSDDGNQ) the composition is skewed to basic and acidic residues. Residues 31–81 (KAEAEDNATEVRSDKAFSELSSPEKEKSDDGNQRRKRAQLPTGPGTSPPSL) are disordered. One can recognise a Helicase ATP-binding domain in the interval 99–265 (VSLIENNSVV…FGSPIRNQMN (167 aa)). ATP is bound at residue 112–119 (GATGSGKT). A DEAH box motif is present at residues 211–214 (DEVH). The Helicase C-terminal domain maps to 317-503 (SLIQSFDEME…LLKVKLLDMG (187 aa)). In terms of domain architecture, Tudor spans 901–962 (SLYPNLLCVA…RELPSDLMTP (62 aa)).

It belongs to the DEAD box helicase family. DEAH subfamily.

Its subcellular location is the cytoplasm. The protein localises to the nucleus. It carries out the reaction ATP + H2O = ADP + phosphate + H(+). ATP-binding RNA helicase which plays a central role during spermatogenesis by repressing transposable elements and preventing their mobilization, which is essential for the germline integrity. Acts via the piRNA metabolic process, which mediates the repression of transposable elements during meiosis by forming complexes composed of piRNAs and Piwi proteins and governs the methylation and subsequent repression of transposons. Acts downstream of piRNA biogenesis: exclusively required for transposon silencing in the nucleus, suggesting that it acts as a nuclear effector in the nucleus together with piwil4. The protein is ATP-dependent RNA helicase TDRD9 of Danio rerio (Zebrafish).